A 428-amino-acid chain; its full sequence is Adenylosuccinate synthetase (428 aa).

GTP-binding positions include 12 to 18 (GDEGKGK) and 40 to 42 (GHT). The Proton acceptor role is filled by aspartate 13. Mg(2+) contacts are provided by aspartate 13 and glycine 40. Residues 13–16 (DEGK), 38–41 (NAGH), threonine 131, arginine 145, glutamine 226, threonine 241, and arginine 305 contribute to the IMP site. Histidine 41 serves as the catalytic Proton donor. Substrate is bound at residue 301–307 (ATTGRKR). Residues arginine 307, 333 to 335 (KLD), and 415 to 417 (SVG) each bind GTP.

This sequence belongs to the adenylosuccinate synthetase family. In terms of assembly, homodimer. Mg(2+) is required as a cofactor.

Its subcellular location is the cytoplasm. It carries out the reaction IMP + L-aspartate + GTP = N(6)-(1,2-dicarboxyethyl)-AMP + GDP + phosphate + 2 H(+). It functions in the pathway purine metabolism; AMP biosynthesis via de novo pathway; AMP from IMP: step 1/2. In terms of biological role, plays an important role in the de novo pathway of purine nucleotide biosynthesis. Catalyzes the first committed step in the biosynthesis of AMP from IMP. The polypeptide is Adenylosuccinate synthetase (Nitratidesulfovibrio vulgaris (strain DSM 19637 / Miyazaki F) (Desulfovibrio vulgaris)).